Reading from the N-terminus, the 558-residue chain is N-acetylglucosamine-6-O-sulfatase (558 aa).

Residue Ser-101 is modified to 3-oxoalanine (Ser).

It belongs to the sulfatase family. In terms of processing, the conversion to 3-oxoalanine (also known as C-formylglycine, FGly), of a serine or cysteine residue in prokaryotes and of a cysteine residue in eukaryotes, is critical for catalytic activity.

Its function is as follows. Exosulfatase involved in the degradation of the glycosaminoglycan (GAG) heparan sulfate (HS). Catalyzes the hydrolysis of the 6-sulfate groups of the N-acetyl-D-glucosamine 6-sulfate units. GAG-specific sulfatases play a key role in the persistence of the major human gut symbiont B.thetaiotaomicron in the host gastrointestinal tract. In Bacteroides thetaiotaomicron (strain ATCC 29148 / DSM 2079 / JCM 5827 / CCUG 10774 / NCTC 10582 / VPI-5482 / E50), this protein is N-acetylglucosamine-6-O-sulfatase.